A 197-amino-acid chain; its full sequence is Recombination protein RecR (197 aa).

A C4-type zinc finger spans residues Cys-57–Cys-72. One can recognise a Toprim domain in the interval Gly-79–Pro-174.

The protein belongs to the RecR family.

May play a role in DNA repair. It seems to be involved in an RecBC-independent recombinational process of DNA repair. It may act with RecF and RecO. In Geobacter sp. (strain M21), this protein is Recombination protein RecR.